A 122-amino-acid chain; its full sequence is uncharacterized protein (122 aa).

This is an uncharacterized protein from Escherichia coli O157:H7.